We begin with the raw amino-acid sequence, 152 residues long: MKTPIELKILDSRIGSEFPLPAYATLGSAGMDLRAMIDTTMTIAPGETQLIPTGIAIHVADPGLAAVILPRSGLGHKHGIVLGNLVGLIDSDYQGPLMVSCWNRSNSPFTLDIGDRLAQLVFVPVVQAQFKLVDEFDSSDRGEGGFGHSGTK.

Residues 71 to 73 (RSG), asparagine 84, 88 to 90 (LID), and methionine 98 contribute to the substrate site.

It belongs to the dUTPase family. Requires Mg(2+) as cofactor.

It catalyses the reaction dUTP + H2O = dUMP + diphosphate + H(+). The protein operates within pyrimidine metabolism; dUMP biosynthesis; dUMP from dCTP (dUTP route): step 2/2. Functionally, this enzyme is involved in nucleotide metabolism: it produces dUMP, the immediate precursor of thymidine nucleotides and it decreases the intracellular concentration of dUTP so that uracil cannot be incorporated into DNA. The protein is Deoxyuridine 5'-triphosphate nucleotidohydrolase of Shewanella putrefaciens (strain CN-32 / ATCC BAA-453).